The following is a 380-amino-acid chain: N5-carboxyaminoimidazole ribonucleotide synthase (380 aa).

Residues Arg108, Lys148, 153–159, 183–186, Glu191, His214, and 268–269 each bind ATP; these read GYDGKGQ, ESWV, and NE. The ATP-grasp domain maps to 112–298; sequence KKAIQSAGCE…QFEQHIRAVC (187 aa).

Belongs to the PurK/PurT family. As to quaternary structure, homodimer.

It carries out the reaction 5-amino-1-(5-phospho-beta-D-ribosyl)imidazole + hydrogencarbonate + ATP = 5-carboxyamino-1-(5-phospho-D-ribosyl)imidazole + ADP + phosphate + 2 H(+). The protein operates within purine metabolism; IMP biosynthesis via de novo pathway; 5-amino-1-(5-phospho-D-ribosyl)imidazole-4-carboxylate from 5-amino-1-(5-phospho-D-ribosyl)imidazole (N5-CAIR route): step 1/2. In terms of biological role, catalyzes the ATP-dependent conversion of 5-aminoimidazole ribonucleotide (AIR) and HCO(3)(-) to N5-carboxyaminoimidazole ribonucleotide (N5-CAIR). This chain is N5-carboxyaminoimidazole ribonucleotide synthase, found in Bacillus subtilis (strain 168).